The following is a 1071-amino-acid chain: Intracellular phospholipase A2 (1071 aa).

The tract at residues 1–22 (MTTTNKDGPFRQQYLPGVHKEP) is disordered. 7 ANK repeats span residues 411-440 (ENCY…TLFC), 479-508 (DGQS…KFTR), 510-539 (DRNE…EIAN), 544-570 (LGNS…ELGL), 578-610 (AGET…NMNA), 614-651 (HGNT…KINL), and 652-681 (RGES…TRCP). A PNPLA domain is found at 748–921 (ISMDGGGIRG…ISNNPALDLM (174 aa)). Residues 752–757 (GGGIRG) carry the GXGXXG motif. The short motif at 784 to 788 (GTSTG) is the GXSXG element. Residue serine 786 is the Nucleophile of the active site. The Proton acceptor role is filled by aspartate 908. The DGA/G signature appears at 908 to 910 (DGG).

The protein belongs to the patatin family.

The catalysed reaction is a 1,2-diacyl-sn-glycero-3-phosphocholine + H2O = a 1-acyl-sn-glycero-3-phosphocholine + a fatty acid + H(+). In terms of biological role, phospholipase that plays a critical role during oogenesis, ovulation, and/or embryogenesis. The chain is Intracellular phospholipase A2 from Caenorhabditis elegans.